Here is a 125-residue protein sequence, read N- to C-terminus: Ribonuclease pancreatic (125 aa).

Substrate is bound by residues lysine 7 and arginine 10. Histidine 12 functions as the Proton acceptor in the catalytic mechanism. Disulfide bonds link cysteine 27–cysteine 85, cysteine 41–cysteine 96, cysteine 59–cysteine 111, and cysteine 66–cysteine 73. Asparagine 35 carries an N-linked (GlcNAc...) asparagine glycan. Substrate-binding positions include 42 to 46 (KPVNT), lysine 67, and arginine 86. Histidine 120 acts as the Proton donor in catalysis.

This sequence belongs to the pancreatic ribonuclease family. In terms of assembly, monomer. Interacts with and forms tight 1:1 complexes with RNH1. Dimerization of two such complexes may occur. Interaction with RNH1 inhibits this protein. Pancreas.

The protein localises to the secreted. It carries out the reaction an [RNA] containing cytidine + H2O = an [RNA]-3'-cytidine-3'-phosphate + a 5'-hydroxy-ribonucleotide-3'-[RNA].. The catalysed reaction is an [RNA] containing uridine + H2O = an [RNA]-3'-uridine-3'-phosphate + a 5'-hydroxy-ribonucleotide-3'-[RNA].. Its function is as follows. Endonuclease that catalyzes the cleavage of RNA on the 3' side of pyrimidine nucleotides. Acts on single-stranded and double-stranded RNA. In Spalax ehrenbergi (Middle East blind mole rat), this protein is Ribonuclease pancreatic (RNASE1).